We begin with the raw amino-acid sequence, 30 residues long: Cycloviolacin-O4 (30 aa).

The segment at residues 1–30 (GIPCGESCVWIPCISSAIGCSCKNKVCYRN) is a cross-link (cyclopeptide (Gly-Asn)). Cystine bridges form between cysteine 4-cysteine 20, cysteine 8-cysteine 22, and cysteine 13-cysteine 27.

In terms of processing, this is a cyclic peptide. Expressed in petals, petioles, roots and runners but not in leaves (at protein level).

Functionally, probably participates in a plant defense mechanism. The polypeptide is Cycloviolacin-O4 (Viola odorata (Sweet violet)).